A 415-amino-acid polypeptide reads, in one-letter code: Glutamyl-tRNA reductase (415 aa).

Residues 49–52 (TCNR), serine 104, 109–111 (EPQ), and glutamine 115 each bind substrate. The Nucleophile role is filled by cysteine 50. Residue 184–189 (GAGEMI) coordinates NADP(+).

Belongs to the glutamyl-tRNA reductase family. In terms of assembly, homodimer.

It catalyses the reaction (S)-4-amino-5-oxopentanoate + tRNA(Glu) + NADP(+) = L-glutamyl-tRNA(Glu) + NADPH + H(+). Its pathway is porphyrin-containing compound metabolism; protoporphyrin-IX biosynthesis; 5-aminolevulinate from L-glutamyl-tRNA(Glu): step 1/2. Catalyzes the NADPH-dependent reduction of glutamyl-tRNA(Glu) to glutamate 1-semialdehyde (GSA). In Neisseria meningitidis serogroup B (strain ATCC BAA-335 / MC58), this protein is Glutamyl-tRNA reductase.